Reading from the N-terminus, the 438-residue chain is Ribosomal protein uS12 methylthiotransferase RimO (438 aa).

Residues 4–114 form the MTTase N-terminal domain; the sequence is PRVSFVSLGC…VMNAVHEVAP (111 aa). [4Fe-4S] cluster is bound by residues C13, C49, C78, C146, C150, and C153. In terms of domain architecture, Radical SAM core spans 132-370; sequence LTPRHYAYLK…MAKQQQISTN (239 aa). Residues 373–438 enclose the TRAM domain; sequence KKKVGKRLPV…DAYDLHGTAV (66 aa).

The protein belongs to the methylthiotransferase family. RimO subfamily. Requires [4Fe-4S] cluster as cofactor.

The protein resides in the cytoplasm. The catalysed reaction is L-aspartate(89)-[ribosomal protein uS12]-hydrogen + (sulfur carrier)-SH + AH2 + 2 S-adenosyl-L-methionine = 3-methylsulfanyl-L-aspartate(89)-[ribosomal protein uS12]-hydrogen + (sulfur carrier)-H + 5'-deoxyadenosine + L-methionine + A + S-adenosyl-L-homocysteine + 2 H(+). Catalyzes the methylthiolation of an aspartic acid residue of ribosomal protein uS12. The sequence is that of Ribosomal protein uS12 methylthiotransferase RimO from Brucella ovis (strain ATCC 25840 / 63/290 / NCTC 10512).